The primary structure comprises 277 residues: Large ribosomal subunit protein uL2 (277 aa).

Residues valine 227–lysine 277 form a disordered region. Over residues lysine 266 to lysine 277 the composition is skewed to basic and acidic residues.

Belongs to the universal ribosomal protein uL2 family. Part of the 50S ribosomal subunit. Forms a bridge to the 30S subunit in the 70S ribosome.

In terms of biological role, one of the primary rRNA binding proteins. Required for association of the 30S and 50S subunits to form the 70S ribosome, for tRNA binding and peptide bond formation. It has been suggested to have peptidyltransferase activity; this is somewhat controversial. Makes several contacts with the 16S rRNA in the 70S ribosome. This is Large ribosomal subunit protein uL2 from Magnetococcus marinus (strain ATCC BAA-1437 / JCM 17883 / MC-1).